Consider the following 315-residue polypeptide: Probable diguanylate cyclase DgcF (315 aa).

A run of 4 helical transmembrane segments spans residues 10 to 30, 41 to 61, 80 to 100, and 116 to 136; these read FSTG…GVLP, IALI…SLAF, LLTF…VIDI, and LGIA…AAIN. Residues 173–310 form the GGDEF domain; it reads QHLTVMLLDI…GRNRTSTMRY (138 aa). Asp-181 and Ile-182 together coordinate Mg(2+). Positions 189, 194, and 198 each coordinate substrate. Position 224 (Glu-224) interacts with Mg(2+).

In terms of assembly, homodimer. Mg(2+) is required as a cofactor.

The protein localises to the cell membrane. It catalyses the reaction 2 GTP = 3',3'-c-di-GMP + 2 diphosphate. It participates in purine metabolism; 3',5'-cyclic di-GMP biosynthesis. Its function is as follows. Catalyzes the synthesis of cyclic-di-GMP (c-di-GMP) via the condensation of 2 GTP molecules. In Escherichia coli (strain K12), this protein is Probable diguanylate cyclase DgcF.